A 288-amino-acid chain; its full sequence is Glycine--tRNA ligase alpha subunit (288 aa).

Belongs to the class-II aminoacyl-tRNA synthetase family. Tetramer of two alpha and two beta subunits.

The protein localises to the cytoplasm. It catalyses the reaction tRNA(Gly) + glycine + ATP = glycyl-tRNA(Gly) + AMP + diphosphate. The chain is Glycine--tRNA ligase alpha subunit from Desulfatibacillum aliphaticivorans.